Reading from the N-terminus, the 674-residue chain is MTDIIRAAEAIAQLRREIERHTHLYYVEAKPELSDFEFDQLLDQLITLERQFPQLLTPDSPSQRVGGAITREFPAVQHREPMLSLSNSYSITEVEEFYNRVRKLLALEGVVEQEMVAELKFDGVAISLIYQDGILVRGATRGDGRQGDDITANLKTVATIPLRLEETLVAALQGEERAIEVRGEVFMRKEDFERLNESRPDEDRFANPRNATAGSLKLQDSGEVARRSMSFVAYYLKGLKDESTPHIHRLELLARLGFFTGDHYRLCNTLEEINTYIAEWAEKRWQLPYETDGVVLKLNDVPFREKLGATAKSPRWAIAYKYPAQQARSVLQNVLFQVGRLGTITPVAELEPVLLAGSTVSRSTLHNFDEIERLGLMLRDRVIIEKSGEVIPKVVRTLFEERPADAMPILPPTHCPSCGAPLVRPENEVSYSCPNEEECPAQIKGRLLHFASRNAMDIQTLGDALVEQLVAKGLVKDPGDLYFLQEPQLEKLERMGPKSAQNILRALEKSREKSYERLLYALGIRHVGRATARELSQACPSIDLLREASEEQLATIPDIGPVVARSIIDYFAKPSWPHLLEKLRTAALQLSASEPKEQVNRNFEGVTVLFTGSLERYDRQKASELVLERGGRVVGSVSKKTGMVVAGQDPGSKLQKANKLGVRVVSEDEFEAML.

NAD(+) contacts are provided by residues aspartate 35–aspartate 39, serine 84–leucine 85, and glutamate 118. Lysine 120 acts as the N6-AMP-lysine intermediate in catalysis. NAD(+) is bound by residues arginine 141, glutamate 184, lysine 297, and lysine 321. Positions 415, 418, 433, and 439 each coordinate Zn(2+). The region spanning glutamine 598–leucine 674 is the BRCT domain.

Belongs to the NAD-dependent DNA ligase family. LigA subfamily. The cofactor is Mg(2+). It depends on Mn(2+) as a cofactor.

It carries out the reaction NAD(+) + (deoxyribonucleotide)n-3'-hydroxyl + 5'-phospho-(deoxyribonucleotide)m = (deoxyribonucleotide)n+m + AMP + beta-nicotinamide D-nucleotide.. Its function is as follows. DNA ligase that catalyzes the formation of phosphodiester linkages between 5'-phosphoryl and 3'-hydroxyl groups in double-stranded DNA using NAD as a coenzyme and as the energy source for the reaction. It is essential for DNA replication and repair of damaged DNA. The polypeptide is DNA ligase (Pelodictyon phaeoclathratiforme (strain DSM 5477 / BU-1)).